The chain runs to 510 residues: Maturase K (510 aa).

This sequence belongs to the intron maturase 2 family. MatK subfamily.

The protein localises to the plastid. Its subcellular location is the chloroplast. Usually encoded in the trnK tRNA gene intron. Probably assists in splicing its own and other chloroplast group II introns. The sequence is that of Maturase K from Populus trichocarpa (Western balsam poplar).